A 265-amino-acid polypeptide reads, in one-letter code: 6-oxopurine nucleoside phosphorylase (265 aa).

Residues serine 10, 49–50 (RH), and 82–83 (SA) each bind phosphate. 2 cysteine pairs are disulfide-bonded: cysteine 136–cysteine 202 and cysteine 162–cysteine 190. Methionine 187 contacts substrate. Threonine 188 serves as a coordination point for phosphate. Residue 211–213 (NYA) coordinates substrate. Cysteine 254 and cysteine 256 are disulfide-bonded.

This sequence belongs to the PNP/MTAP phosphorylase family. MTAP subfamily. As to quaternary structure, homohexamer. Dimer of a homotrimer.

The enzyme catalyses a purine D-ribonucleoside + phosphate = a purine nucleobase + alpha-D-ribose 1-phosphate. It carries out the reaction guanosine + phosphate = alpha-D-ribose 1-phosphate + guanine. It catalyses the reaction inosine + phosphate = alpha-D-ribose 1-phosphate + hypoxanthine. It participates in purine metabolism; purine nucleoside salvage. Functionally, purine nucleoside phosphorylase which is highly specific for 6-oxopurine nucleosides. Cleaves guanosine or inosine to respective bases and sugar-1-phosphate molecules. Involved in purine salvage. This is 6-oxopurine nucleoside phosphorylase from Pyrococcus furiosus (strain ATCC 43587 / DSM 3638 / JCM 8422 / Vc1).